Consider the following 148-residue polypeptide: MVNIIEQLEKEQIEKLTADRGVPSFAPGDTLKVNVKVIEGNRERVQAYEGVCIARKNDGLNSSFVVRKISYGEGVERIFPLYSPNIASIEVVRRGDVRRAKLYYLRDRRGKSARIAEQTTGHSGKVAAAERADAAAVKAAKVAAAKVE.

This sequence belongs to the bacterial ribosomal protein bL19 family.

Its function is as follows. This protein is located at the 30S-50S ribosomal subunit interface and may play a role in the structure and function of the aminoacyl-tRNA binding site. This Paramagnetospirillum magneticum (strain ATCC 700264 / AMB-1) (Magnetospirillum magneticum) protein is Large ribosomal subunit protein bL19.